A 970-amino-acid chain; its full sequence is Serine/threonine-protein kinase PLK4 (970 aa).

Positions 12–265 constitute a Protein kinase domain; it reads FKVGNLLGKG…LSSVLDHPFM (254 aa). Residues 18 to 26 and Lys41 contribute to the ATP site; that span reads LGKGSFAGV. N6-acetyllysine occurs at positions 45 and 46. Residue Asp136 is the Proton acceptor of the active site. The segment at 324–373 is disordered; sequence VFPKNKSSSDFSSSGDGNSFYTQWGNQETSNSGRGRVIQDAEERPHSRYL. Residues 327 to 343 show a composition bias toward low complexity; it reads KNKSSSDFSSSGDGNSF. A compositionally biased stretch (polar residues) spans 344–356; it reads YTQWGNQETSNSG. Basic and acidic residues predominate over residues 360 to 369; the sequence is VIQDAEERPH. Ser401 is subject to Phosphoserine. A disordered region spans residues 498–540; the sequence is ISPTRDFQGHPDLQKDTSKNAWTDTKVKKNSDASDNAHSVKQP. Residues 504-515 are compositionally biased toward basic and acidic residues; sequence FQGHPDLQKDTS. Positions 530-540 are enriched in polar residues; sequence ASDNAHSVKQP. The Cryptic POLO box 1 (CPB1) domain occupies 586–699; it reads TLRSITSPLV…SRFVQLVRSK (114 aa). Ser665 is subject to Phosphoserine. One can recognise a Cryptic POLO box 2 (CPB2) domain in the interval 700–813; sequence SPKITYFTRY…GRKPGSTSSP (114 aa). The interval 808-829 is disordered; it reads GSTSSPKALSPPPSVDSNYPTR. Ser817 bears the Phosphoserine mark. One can recognise a POLO box domain in the interval 886–964; sequence QLLKSVFVKN…LSSILLMFSN (79 aa).

Belongs to the protein kinase superfamily. Ser/Thr protein kinase family. CDC5/Polo subfamily. Homodimer. Interacts with CEP152 (via N-terminus). Interacts with CEP78; this interaction may be important for proper PLK4 localization to the centriole and PLK4-induced overduplication of centrioles. Interacts with CEP131. Interacts simultaneously with TENT5C and CEP192. Interacts with TENT5C; this interaction leads to the TENT5C recruitment in the centrosome. Interacts with CEP85; this interaction may be important in cell migration and centriole assembly. Ubiquitinated; leading to its degradation by the proteasome. Deubiquitinated by USP54; leading to PLK4 stabilization. Post-translationally, tyrosine-phosphorylated by TEC. In terms of processing, acetylation by KAT2A and KAT2B impairs kinase activity by shifting the kinase to an inactive conformation.

It localises to the cytoplasm. It is found in the cytoskeleton. The protein resides in the microtubule organizing center. Its subcellular location is the centrosome. The protein localises to the centriole. It localises to the nucleus. It is found in the nucleolus. The protein resides in the cleavage furrow. The catalysed reaction is L-seryl-[protein] + ATP = O-phospho-L-seryl-[protein] + ADP + H(+). It carries out the reaction L-threonyl-[protein] + ATP = O-phospho-L-threonyl-[protein] + ADP + H(+). In terms of biological role, serine/threonine-protein kinase that plays a central role in centriole duplication. Able to trigger procentriole formation on the surface of the parental centriole cylinder, leading to the recruitment of centriole biogenesis proteins such as SASS6, CPAP, CCP110, CEP135 and gamma-tubulin. When overexpressed, it is able to induce centrosome amplification through the simultaneous generation of multiple procentrioles adjoining each parental centriole during S phase. Phosphorylates 'Ser-151' of FBXW5 during the G1/S transition, leading to inhibit FBXW5 ability to ubiquitinate SASS6. Its central role in centriole replication suggests a possible role in tumorigenesis, centrosome aberrations being frequently observed in tumors. Also involved in deuterosome-mediated centriole amplification in multiciliated that can generate more than 100 centrioles. Also involved in trophoblast differentiation by phosphorylating HAND1, leading to disrupt the interaction between HAND1 and MDFIC and activate HAND1. Phosphorylates CDC25C and CHEK2. Required for the recruitment of STIL to the centriole and for STIL-mediated centriole amplification. Phosphorylates CEP131 and PCM1 which is essential for proper organization and integrity of centriolar satellites. In Pongo abelii (Sumatran orangutan), this protein is Serine/threonine-protein kinase PLK4.